A 150-amino-acid chain; its full sequence is Ribosome maturation factor RimP (150 aa).

Belongs to the RimP family.

The protein resides in the cytoplasm. Its function is as follows. Required for maturation of 30S ribosomal subunits. This is Ribosome maturation factor RimP from Yersinia pestis bv. Antiqua (strain Antiqua).